We begin with the raw amino-acid sequence, 527 residues long: Glucose-6-phosphate isomerase (527 aa).

The active-site Proton donor is the E323. Residues H352 and K454 contribute to the active site.

Belongs to the GPI family.

It localises to the cytoplasm. It catalyses the reaction alpha-D-glucose 6-phosphate = beta-D-fructose 6-phosphate. The protein operates within carbohydrate biosynthesis; gluconeogenesis. It functions in the pathway carbohydrate degradation; glycolysis; D-glyceraldehyde 3-phosphate and glycerone phosphate from D-glucose: step 2/4. Its function is as follows. Catalyzes the reversible isomerization of glucose-6-phosphate to fructose-6-phosphate. This chain is Glucose-6-phosphate isomerase, found in Prochlorococcus marinus (strain MIT 9215).